The chain runs to 387 residues: Gibberellic acid methyltransferase 2 (387 aa).

Position 33 (Tyr-33) interacts with S-adenosyl-L-homocysteine. Residue Gln-40 coordinates gibberellin A4. Residues Cys-74, Asn-79, Asp-113, Leu-114, Ser-146, and Phe-147 each contribute to the S-adenosyl-L-homocysteine site. Gibberellin A4 is bound by residues His-167 and Trp-168. Residues Asn-185, Arg-275, Asp-276, Phe-278, and Asn-279 each contribute to the Mg(2+) site.

It belongs to the methyltransferase superfamily. Type-7 methyltransferase family. SABATH subfamily. It depends on Mg(2+) as a cofactor. As to expression, expressed in siliques and germinating seeds. Not detected in leaves, stems, flowers and roots.

The enzyme catalyses gibberellin A4 + S-adenosyl-L-methionine = O-methyl gibberellin A4 + S-adenosyl-L-homocysteine. Down-regulated by Zn(2+), Cu(2+) and Fe(3+). No effect of K(+), NH(4+), Na(+), Ca(2+), Mg(2+), Mn(2+) and Fe(2+). Its function is as follows. Methylates the carboxyl group of several gibberellins (GAs). Substrate preference is GA4 &gt; GA34 &gt; GA9 &gt; GA3 &gt; GA1 &gt; GA51 &gt; GA20. No activity with diterpenes abietic acid and ent-kaurenoic acid. The polypeptide is Gibberellic acid methyltransferase 2 (GAMT2) (Arabidopsis thaliana (Mouse-ear cress)).